Consider the following 340-residue polypeptide: Mitochondrial carrier protein CoAc1 (340 aa).

6 helical membrane-spanning segments follow: residues 22–42 (ALDLLPVYAKELIAGGAAGAF), 85–105 (FYKGNGASVLRIVPYAALHYM), 130–147 (LLAGSAAGGTAVLCTYPL), 199–219 (GVGPTLIGILPYAGLKFYIYE), 237–257 (LSCGALAGLFGQTLTYPLDVV), and 297–317 (FAGLSLNYVKVVPSVAIGFTT). Solcar repeat units lie at residues 27–113 (PVYA…YRCW), 124–224 (TGPV…LKSQ), and 231–324 (DSVI…MKAL).

Belongs to the mitochondrial carrier (TC 2.A.29) family. Expressed throughout the plant.

The protein localises to the mitochondrion inner membrane. Required for the accumulation of coenzyme A in the mitochondrial matrix. This Zea mays (Maize) protein is Mitochondrial carrier protein CoAc1.